The primary structure comprises 658 residues: Sulfate transporter 3.1 (658 aa).

Topologically, residues 1-85 (MGTEDYTFPQ…RYNLKFFKSD (85 aa)) are cytoplasmic. The helical transmembrane segment at 86 to 106 (LIAGITIASLAIPQGISYAKL) threads the bilayer. At 107-108 (AN) the chain is on the extracellular side. Residues 109 to 129 (LPPILGLYSSFVPPLVYAVLG) form a helical membrane-spanning segment. Topologically, residues 130–133 (SSRD) are cytoplasmic. A helical transmembrane segment spans residues 134 to 154 (LAVGTVAVASLLTGAMLSKEV). Residues 155–163 (DAEKDPKLY) lie on the Extracellular side of the membrane. Residues 164-184 (LHLAFTATFFAGVLEASLGIF) form a helical membrane-spanning segment. Residue Arg185 is a topological domain, cytoplasmic. Residues 186 to 206 (LGFIVDFLSHATIVGFMGGAA) traverse the membrane as a helical segment. Topologically, residues 207-245 (TVVSLQQLKGIFGLKHFTDSTDVISVMRSVFSQTHEWRW) are extracellular. A helical transmembrane segment spans residues 246-266 (ESGVLGCGFLFFLLSTRYFSI). The Cytoplasmic segment spans residues 267-271 (KKPKF). A helical membrane pass occupies residues 272–292 (FWVAAMAPLTSVILGSLLVYF). Topologically, residues 293-332 (THAERHGVQVIGDLKKGLNPLSGSDLIFTSPYMSTAVKTG) are extracellular. A helical transmembrane segment spans residues 333-353 (LITGIIALAEGVAVGRSFAMF). The Cytoplasmic segment spans residues 354–363 (KNYNIDGNKE). Residues 364–384 (MIAFGMMNIVGSFTSCYLTTG) form a helical membrane-spanning segment. Over 385 to 398 (PFSRSAVNYNAGCK) the chain is Extracellular. Residues 399–419 (TAMSNIVMAIAVMFTLLFLTP) form a helical membrane-spanning segment. The Cytoplasmic portion of the chain corresponds to 420–425 (LFHYTP). Residues 426 to 446 (LVVLSAIIISAMLGLIDYQAA) traverse the membrane as a helical segment. Topologically, residues 447–464 (IHLWKVDKFDFLVCMSAY) are extracellular. A helical transmembrane segment spans residues 465–485 (VGVVFGSVEIGLVVAVAISIA). Residues 486–658 (RLLLFVSRPK…ASKNEPWNNV (173 aa)) are Cytoplasmic-facing. The STAS domain occupies 513–637 (QYPSSRTVPG…LTVGEAVEAC (125 aa)).

It belongs to the SLC26A/SulP transporter (TC 2.A.53) family. In terms of tissue distribution, expressed only in leaves.

Its subcellular location is the membrane. H(+)/sulfate cotransporter that may play a role in the regulation of sulfate assimilation. The polypeptide is Sulfate transporter 3.1 (SULTR3;1) (Arabidopsis thaliana (Mouse-ear cress)).